The following is a 111-amino-acid chain: Disintegrin DS-AN (111 aa).

The first 20 residues, 1–20, serve as a signal peptide directing secretion; that stretch reads MIQVLLVIICLAVFPYQGSC. Positions 21-47 are excised as a propeptide; that stretch reads IILESGNVNDYEIVYPKKLIVLPTGAM. The Disintegrin domain occupies 47 to 111; it reads MNSPHPCCDP…PDCPRNPYKD (65 aa). Cystine bridges form between cysteine 53–cysteine 76, cysteine 67–cysteine 73, cysteine 72–cysteine 97, and cysteine 85–cysteine 104. The short motif at 89–91 is the Cell attachment site element; sequence RGD.

As to quaternary structure, heterodimer; disulfide-linked.

It is found in the secreted. Its function is as follows. Inhibits ADP-induced platelet aggregation in human platelet-rich plasma (IC(50) is 8 uM). The sequence is that of Disintegrin DS-AN from Atheris nitschei (Great lakes bush viper).